Here is an 838-residue protein sequence, read N- to C-terminus: Spindle pole body component 110 (838 aa).

3 disordered regions span residues 1–67 (MSDS…ADDT), 187–209 (SEHK…MRSL), and 287–310 (LQKA…KEIE). 2 coiled-coil regions span residues 163-644 (LQEW…GKRE) and 682-709 (SEKY…LERA). The span at 287 to 303 (LQKANHDSSSLADQKLQ) shows a compositional bias: polar residues.

This sequence belongs to the SPC110 family. In terms of assembly, homodimer.

The protein localises to the nucleus. It localises to the cytoplasm. Its subcellular location is the cytoskeleton. It is found in the microtubule organizing center. The protein resides in the spindle pole body. In terms of biological role, component of the spindle pole body (SPB) required for the proper execution of spindle pole body (SPB) duplication. Potential role in cross-linking filaments or anchoring other molecules. It is essential for growth. The protein is Spindle pole body component 110 (SPC110) of Lachancea thermotolerans (strain ATCC 56472 / CBS 6340 / NRRL Y-8284) (Yeast).